The chain runs to 166 residues: Twist-related protein (166 aa).

Over residues 1–18 the composition is skewed to low complexity; sequence MMQEESSSPVSPVDSLSN. The tract at residues 1-83 is disordered; the sequence is MMQEESSSPV…RVMANVRERQ (83 aa). The span at 28–39 shows a compositional bias: basic residues; the sequence is SKRGCRKRRSAR. Over residues 57 to 75 the composition is skewed to polar residues; the sequence is ASSTGSSPQSFEELQSQRV. Residues 72 to 123 form the bHLH domain; sequence SQRVMANVRERQRTQSLNEAFSSLRKIIPTLPSDKLSKIQTLKLASRYIDFL.

In terms of assembly, efficient DNA binding requires dimerization with another bHLH protein. Homodimer. Subset of mesodermal cells.

The protein localises to the nucleus. Its function is as follows. Probable transcription factor, which may be involved, with other proteins, in establishing the pattern of cell type-specific gene expression in mesodermal cell subgroups. In Xenopus laevis (African clawed frog), this protein is Twist-related protein (twist1).